An 849-amino-acid polypeptide reads, in one-letter code: Lysine-specific histone demethylase 1 homolog 1 (849 aa).

The tract at residues 1–118 is disordered; that stretch reads MEEGSEAQPP…RRRRKKQFPG (118 aa). 2 stretches are compositionally biased toward low complexity: residues 34–67 and 89–103; these read GQAAAAEAMEGEAEGAAAAAGTIEGEAGYAAADA and PTSSAPSATAAVDDS. The segment covering 106-115 has biased composition (basic residues); the sequence is ARKRRRRKKQ. In terms of domain architecture, SWIRM spans 159–260; that stretch reads ARELDAEALI…FGLAPSVISL (102 aa). FAD-binding residues include E300, R302, R308, and E688.

The protein belongs to the flavin monoamine oxidase family. FAD serves as cofactor.

Functionally, probable histone demethylase. The polypeptide is Lysine-specific histone demethylase 1 homolog 1 (Oryza sativa subsp. japonica (Rice)).